We begin with the raw amino-acid sequence, 243 residues long: Juxtaposed with another zinc finger protein 1 (243 aa).

The C2H2-type 1 zinc finger occupies 12–37 (NTCRFGGCGLHFPTLADLIEHIEDNH). The required for interaction with NR2C2 stretch occupies residues 39–79 (DTDPRVLEKQELQQPTYVALSYINRFMTDAARREQESLKKK). Over residues 89–108 (SSSVSRGNVSTPPRHSSGSL) the composition is skewed to polar residues. The disordered stretch occupies residues 89–151 (SSSVSRGNVS…SDSDESWTTE (63 aa)). A phosphothreonine mark is found at T109 and T113. The span at 118 to 130 (PSSSFRSSTPTGS) shows a compositional bias: low complexity. Residues 131-148 (EYDEEEVDYEESDSDESW) show a composition bias toward acidic residues. A C2H2-type 2 zinc finger spans residues 173–198 (FACPVPGCKKRYKNVNGIKYHAKNGH). The C2H2-type 3; degenerate zinc-finger motif lies at 208 to 230 (FKCRCGKSYKTAQGLRHHTINFH).

As to quaternary structure, interacts with NR2C2 (via ligand-binding region). In terms of tissue distribution, highest expression in testis with moderate levels in colon, placenta, prostate and ovary and low levels in brain, spleen, liver and small intestine.

The protein resides in the nucleus. Acts as a transcriptional corepressor of orphan nuclear receptor NR2C2. Inhibits expression of the gluconeogenesis enzyme PCK2 through inhibition of NR2C2 activity. Also involved in transcriptional activation of NAMPT by promoting expression of PPARA and PPARD. Plays a role in lipid metabolism by suppressing lipogenesis, increasing lipolysis and decreasing lipid accumulation in adipose tissue. Plays a role in glucose homeostasis by improving glucose metabolism and insulin sensitivity. This Homo sapiens (Human) protein is Juxtaposed with another zinc finger protein 1.